Consider the following 474-residue polypeptide: Ribulose bisphosphate carboxylase large chain (474 aa).

Residues N117 and T167 each contribute to the substrate site. K169 (proton acceptor) is an active-site residue. K171 lines the substrate pocket. Mg(2+)-binding residues include K195, D197, and E198. Residue K195 is modified to N6-carboxylysine. The active-site Proton acceptor is the H288. 3 residues coordinate substrate: R289, H321, and S373.

The protein belongs to the RuBisCO large chain family. Type I subfamily. In terms of assembly, heterohexadecamer of 8 large chains and 8 small chains. The cofactor is Mg(2+).

The enzyme catalyses 2 (2R)-3-phosphoglycerate + 2 H(+) = D-ribulose 1,5-bisphosphate + CO2 + H2O. It carries out the reaction D-ribulose 1,5-bisphosphate + O2 = 2-phosphoglycolate + (2R)-3-phosphoglycerate + 2 H(+). Its function is as follows. RuBisCO catalyzes two reactions: the carboxylation of D-ribulose 1,5-bisphosphate, the primary event in carbon dioxide fixation, as well as the oxidative fragmentation of the pentose substrate. Both reactions occur simultaneously and in competition at the same active site. This Hydrogenophilus thermoluteolus (Pseudomonas hydrogenothermophila) protein is Ribulose bisphosphate carboxylase large chain.